A 579-amino-acid chain; its full sequence is Small conductance calcium-activated potassium channel protein 2 (579 aa).

Disordered stretches follow at residues 1-54 and 90-115; these read MSSC…AAAA and TGGGGGGGGSGHGSSSGTKSSKKKNQ. Positions 90–103 are enriched in gly residues; the sequence is TGGGGGGGGSGHGS. Residues 138 to 158 form a helical membrane-spanning segment; that stretch reads ALIFGMFGIVVMVIETELSWG. Tyr-160 carries the post-translational modification Phosphotyrosine. A helical transmembrane segment spans residues 168–188; the sequence is LALKCLISLSTIILLGLIIVY. Residues 214-234 traverse the membrane as a helical segment; sequence IFFICLEILVCAIHPIPGNYT. A helical membrane pass occupies residues 256–276; sequence IILSIPMFLRLYLIARVMLLH. Residues 305-325 form a helical membrane-spanning segment; sequence LMTICPGTVLLVFSISLWIIA. Residues 345-365 constitute an intramembrane region (pore-forming); the sequence is FLGAMWLISITFLSIGYGDMV. Residues 374–394 traverse the membrane as a helical segment; that stretch reads VCLLTGIMGAGCTALVVAVVA. Residues 412-488 are calmodulin-binding; that stretch reads DTQLTKRVKN…LVDLAKTQNI (77 aa). The disordered stretch occupies residues 551-579; sequence VTYNAERSRSSSRRRRSSSTAPPTSSESS. Residues 568–579 show a composition bias toward low complexity; the sequence is SSTAPPTSSESS.

It belongs to the potassium channel KCNN family. KCa2.2/KCNN2 subfamily. Homodimer. Heteromultimer with KCNN1 and KCNN3. The complex is composed of 4 channel subunits each of which binds to a calmodulin subunit which regulates the channel activity through calcium-binding. Interacts (via N-terminal domain) with MPP2. Expressed in atrial myocytes (at protein level). Widely expressed.

Its subcellular location is the membrane. It is found in the cytoplasm. The protein localises to the myofibril. It localises to the sarcomere. The protein resides in the z line. It catalyses the reaction K(+)(in) = K(+)(out). Its activity is regulated as follows. Inhibited by bee venom neurotoxin apamin. Inhibited by UCL 1684 and tetraethylammonium (TEA). Its function is as follows. Small conductance calcium-activated potassium channel that mediates the voltage-independent transmembrane transfer of potassium across the cell membrane through a constitutive interaction with calmodulin which binds the intracellular calcium allowing its opening. The current is characterized by a voltage-independent activation, an intracellular calcium concentration increase-dependent activation and a single-channel conductance of about 3 picosiemens. Also presents an inwardly rectifying current, thus reducing its already small outward conductance of potassium ions, which is particularly the case when the membrane potential displays positive values, above + 20 mV. The inward rectification could be due to a blockade of the outward current by intracellular divalent cations such as calcium and magnesium and could also be due to an intrinsic property of the channel pore, independent of intracellular divalent ions. There are three positively charged amino acids in the S6 transmembrane domain, close to the pore, that collectively control the conductance and rectification through an electrostatic mechanism. Additionally, electrostatic contributions from these residues also play an important role in determining the intrinsic open probability of the channel in the absence of calcium, affecting the apparent calcium affinity for activation. Forms an heteromeric complex with calmodulin, which is constitutively associated in a calcium-independent manner. Channel opening is triggered when calcium binds the calmodulin resulting in a rotary movement leading to the formation of the dimeric complex to open the gate. Plays a role in the repolarization phase of cardiac action potential. This Homo sapiens (Human) protein is Small conductance calcium-activated potassium channel protein 2.